A 347-amino-acid polypeptide reads, in one-letter code: NADH-ubiquinone oxidoreductase chain 2 (347 aa).

A run of 11 helical transmembrane segments spans residues M1 to M21, H25 to M45, F60 to F80, I89 to S109, F111 to L131, I149 to G169, I178 to P198, T201 to L221, S242 to P262, D274 to M294, and M323 to M343.

Belongs to the complex I subunit 2 family. Core subunit of respiratory chain NADH dehydrogenase (Complex I) which is composed of 45 different subunits. Interacts with TMEM242.

Its subcellular location is the mitochondrion inner membrane. It carries out the reaction a ubiquinone + NADH + 5 H(+)(in) = a ubiquinol + NAD(+) + 4 H(+)(out). In terms of biological role, core subunit of the mitochondrial membrane respiratory chain NADH dehydrogenase (Complex I) which catalyzes electron transfer from NADH through the respiratory chain, using ubiquinone as an electron acceptor. Essential for the catalytic activity and assembly of complex I. The protein is NADH-ubiquinone oxidoreductase chain 2 of Ceratotherium simum (White rhinoceros).